Reading from the N-terminus, the 130-residue chain is Small ribosomal subunit protein uS8 (130 aa).

Belongs to the universal ribosomal protein uS8 family. As to quaternary structure, part of the 30S ribosomal subunit. Contacts proteins S5 and S12.

One of the primary rRNA binding proteins, it binds directly to 16S rRNA central domain where it helps coordinate assembly of the platform of the 30S subunit. The chain is Small ribosomal subunit protein uS8 from Shewanella halifaxensis (strain HAW-EB4).